We begin with the raw amino-acid sequence, 191 residues long: Gamma-glutamylaminecyclotransferase B (191 aa).

Position 7 to 10 (7 to 10) interacts with substrate; sequence YGTL. Glu82 serves as the catalytic Proton acceptor. Residues 155–178 show a composition bias toward polar residues; it reads SADFSQNSEQEIKKNNSLQILTST. The segment at 155–191 is disordered; that stretch reads SADFSQNSEQEIKKNNSLQILTSTGDDHDVNFRGPLQ.

It belongs to the gamma-glutamylcyclotransferase family.

It catalyses the reaction epsilon-(gamma-L-glutamyl)-L-lysine = 5-oxo-L-proline + L-lysine. Its function is as follows. May contribute to degradation of proteins cross-linked by transglutaminases by degrading the cross-link between a lysine and a glutamic acid residue. Catalyzes the formation of 5-oxo-L-proline from L-gamma-glutamyl-L-epsilon-lysine. The sequence is that of Gamma-glutamylaminecyclotransferase B (ggact.2) from Danio rerio (Zebrafish).